Consider the following 112-residue polypeptide: UPF0102 protein NIS_1551 (112 aa).

The protein belongs to the UPF0102 family.

The chain is UPF0102 protein NIS_1551 from Nitratiruptor sp. (strain SB155-2).